The sequence spans 246 residues: 1-(5-phosphoribosyl)-5-[(5-phosphoribosylamino)methylideneamino] imidazole-4-carboxamide isomerase (246 aa).

The Proton acceptor role is filled by D8. The active-site Proton donor is D129.

The protein belongs to the HisA/HisF family.

It is found in the cytoplasm. The catalysed reaction is 1-(5-phospho-beta-D-ribosyl)-5-[(5-phospho-beta-D-ribosylamino)methylideneamino]imidazole-4-carboxamide = 5-[(5-phospho-1-deoxy-D-ribulos-1-ylimino)methylamino]-1-(5-phospho-beta-D-ribosyl)imidazole-4-carboxamide. It functions in the pathway amino-acid biosynthesis; L-histidine biosynthesis; L-histidine from 5-phospho-alpha-D-ribose 1-diphosphate: step 4/9. This Methylocella silvestris (strain DSM 15510 / CIP 108128 / LMG 27833 / NCIMB 13906 / BL2) protein is 1-(5-phosphoribosyl)-5-[(5-phosphoribosylamino)methylideneamino] imidazole-4-carboxamide isomerase.